The primary structure comprises 487 residues: Probable cytochrome P450 313a5 (487 aa).

Tyrosine 223 bears the Phosphotyrosine mark. Cysteine 433 is a heme binding site.

It belongs to the cytochrome P450 family. Heme serves as cofactor.

The protein resides in the endoplasmic reticulum membrane. It localises to the microsome membrane. May be involved in the metabolism of insect hormones and in the breakdown of synthetic insecticides. In Drosophila melanogaster (Fruit fly), this protein is Probable cytochrome P450 313a5 (Cyp313a5).